The sequence spans 114 residues: Iron-sulfur cluster insertion protein ErpA (114 aa).

3 residues coordinate iron-sulfur cluster: Cys-42, Cys-106, and Cys-108.

It belongs to the HesB/IscA family. Homodimer. Iron-sulfur cluster is required as a cofactor.

Its function is as follows. Required for insertion of 4Fe-4S clusters for at least IspG. The chain is Iron-sulfur cluster insertion protein ErpA from Wigglesworthia glossinidia brevipalpis.